A 182-amino-acid chain; its full sequence is Transcription termination/antitermination protein NusG (182 aa).

It belongs to the NusG family.

In terms of biological role, participates in transcription elongation, termination and antitermination. The polypeptide is Transcription termination/antitermination protein NusG (Chlamydia pneumoniae (Chlamydophila pneumoniae)).